An 800-amino-acid chain; its full sequence is DNA topoisomerase 4 subunit A (800 aa).

One can recognise a Topo IIA-type catalytic domain in the interval 31–495 (LPDVRDGLKP…EIEEIKIDKE (465 aa)). Residue Tyr119 is the O-(5'-phospho-DNA)-tyrosine intermediate of the active site.

This sequence belongs to the type II topoisomerase GyrA/ParC subunit family. ParC type 2 subfamily. In terms of assembly, heterotetramer composed of ParC and ParE.

The protein resides in the cell membrane. It catalyses the reaction ATP-dependent breakage, passage and rejoining of double-stranded DNA.. In terms of biological role, topoisomerase IV is essential for chromosome segregation. It relaxes supercoiled DNA. Performs the decatenation events required during the replication of a circular DNA molecule. The chain is DNA topoisomerase 4 subunit A from Staphylococcus aureus (strain MRSA252).